A 241-amino-acid chain; its full sequence is Carboxy-S-adenosyl-L-methionine synthase (241 aa).

S-adenosyl-L-methionine-binding positions include tyrosine 38, 63–65 (GCS), 88–89 (DN), 116–117 (DI), asparagine 131, and arginine 198.

The protein belongs to the class I-like SAM-binding methyltransferase superfamily. Cx-SAM synthase family. Homodimer.

The catalysed reaction is prephenate + S-adenosyl-L-methionine = carboxy-S-adenosyl-L-methionine + 3-phenylpyruvate + H2O. In terms of biological role, catalyzes the conversion of S-adenosyl-L-methionine (SAM) to carboxy-S-adenosyl-L-methionine (Cx-SAM). This Haemophilus influenzae (strain PittEE) protein is Carboxy-S-adenosyl-L-methionine synthase.